The chain runs to 331 residues: MVIRVGINGFGRIGRVVFRAAQRRNDIEIVGINDLLDADYMAYMLKYDSTHGRFEGAVEVQGGALVVNGKKIRVTSERDPANLKWNEINVDVVVESTGLFLSDDTARKHIQAGAKKVVITGPSKDDTPMFVMGVNHTTYKGEAIVSNASCTTNCLAPLAKVLNDKFGIVEGLMTTVHATTATQKTVDGPSQKDWRGGRGAAQNIIPSSTGAAKAVGKIIPSLNGKLTGMAFRVPTPNVSVVDLTVRLERPATYKQICDAIKAASEGELKGILGYVDEEIVSSDINGIPLTSVFDARAGISLNDNFVKLVSWYDNETGYSNKVHDLIAHITK.

Residues 12–13 (RI), Asp34, and Arg78 contribute to the NAD(+) site. Residues 149–151 (SCT), Thr180, 209–210 (TG), and Arg232 contribute to the D-glyceraldehyde 3-phosphate site. The active-site Nucleophile is Cys150. NAD(+) is bound at residue Asn314.

The protein belongs to the glyceraldehyde-3-phosphate dehydrogenase family. As to quaternary structure, homotetramer.

The protein resides in the cytoplasm. It catalyses the reaction D-glyceraldehyde 3-phosphate + phosphate + NAD(+) = (2R)-3-phospho-glyceroyl phosphate + NADH + H(+). It participates in carbohydrate degradation; glycolysis; pyruvate from D-glyceraldehyde 3-phosphate: step 1/5. This chain is Glyceraldehyde-3-phosphate dehydrogenase, cytosolic, found in Trypanosoma brucei brucei.